The primary structure comprises 506 residues: 2,3-bisphosphoglycerate-independent phosphoglycerate mutase (506 aa).

Mn(2+) contacts are provided by Asp13 and Ser63. Ser63 serves as the catalytic Phosphoserine intermediate. Substrate is bound by residues His124, 153 to 154 (RD), Arg183, Arg189, 254 to 257 (RADR), and Lys330. 5 residues coordinate Mn(2+): Asp396, His400, Asp437, His438, and His456.

This sequence belongs to the BPG-independent phosphoglycerate mutase family. As to quaternary structure, monomer. The cofactor is Mn(2+).

The catalysed reaction is (2R)-2-phosphoglycerate = (2R)-3-phosphoglycerate. The protein operates within carbohydrate degradation; glycolysis; pyruvate from D-glyceraldehyde 3-phosphate: step 3/5. In terms of biological role, catalyzes the interconversion of 2-phosphoglycerate and 3-phosphoglycerate. The protein is 2,3-bisphosphoglycerate-independent phosphoglycerate mutase of Cereibacter sphaeroides (strain ATCC 17025 / ATH 2.4.3) (Rhodobacter sphaeroides).